We begin with the raw amino-acid sequence, 1019 residues long: Outer capsid protein P3 (1019 aa).

This sequence belongs to the phytoreovirus inner capsid protein P3 family. In terms of assembly, homodimer. Homomultimer.

Its subcellular location is the virion. It localises to the host cytoplasm. In terms of biological role, capsid protein which self-assembles to form the inner icosahedral capsid with a T=2 symmetry, and consisting of 60 P3 dimers. The protein is Outer capsid protein P3 of Rice dwarf virus (isolate Fujian) (RDV).